The following is a 61-amino-acid chain: MAKKSLKVKQAKHQKFGVRNYTRCNNCGRPHAVLKKFGICRLCFRKYAYEGQIPGIRKASW.

Cys24, Cys27, Cys40, and Cys43 together coordinate Zn(2+).

This sequence belongs to the universal ribosomal protein uS14 family. Zinc-binding uS14 subfamily. As to quaternary structure, part of the 30S ribosomal subunit. Contacts proteins S3 and S10. The cofactor is Zn(2+).

In terms of biological role, binds 16S rRNA, required for the assembly of 30S particles and may also be responsible for determining the conformation of the 16S rRNA at the A site. The chain is Small ribosomal subunit protein uS14 from Mesoplasma florum (strain ATCC 33453 / NBRC 100688 / NCTC 11704 / L1) (Acholeplasma florum).